A 295-amino-acid polypeptide reads, in one-letter code: Elongation factor Ts (295 aa).

An involved in Mg(2+) ion dislocation from EF-Tu region spans residues 80-83; the sequence is TDFV.

This sequence belongs to the EF-Ts family.

The protein resides in the cytoplasm. In terms of biological role, associates with the EF-Tu.GDP complex and induces the exchange of GDP to GTP. It remains bound to the aminoacyl-tRNA.EF-Tu.GTP complex up to the GTP hydrolysis stage on the ribosome. The sequence is that of Elongation factor Ts from Lysinibacillus sphaericus (strain C3-41).